Reading from the N-terminus, the 494-residue chain is MSILIILIISIIFYLIFDFLYKNFSNRQFKGPLALPLVGSLLHLKDDTHLVFQNDSKLYKDGDNNGKIIKYWFCDQLTLAIYDTNTMKEIYLKNPESLNTRVKSPSTNVIGNRFRGIVTADENYWQFHRDILMKSFTGRKVKSLSSSIEKETIDLITYMKFIEKSGQSFSPRSNFMNFYSNIIFDYVFSRRIENIYEGVNEEQGKVLLAIRELFDYLADTLIVNYLIFTKPFYFLYLKMFGHPADSLKKILTKYYLEHSESIDLNNARDVLDSLIIEYRKVGGKEEQSSIIPMVNELILAGTETNSSTAEWFILTMVNNLDYQDKIYNELKSTLETTTAMIKLSNRNQTPLFNAALKEVLRLYPPVPFGVPRQVNQSFEINGGSLKIPKGTQIIQSLYSIFRDENYWDSPDQFKPERFLDQDSHSNNYFPYGIGVKNCIGMGFSQDELYISLSNLVLNFKLLPLIENSKICDKPIFGFSFKPNEFKINLEKRNN.

The chain crosses the membrane as a helical span at residues 1 to 21 (MSILIILIISIIFYLIFDFLY). Cys-438 contacts heme.

Belongs to the cytochrome P450 family. Heme serves as cofactor.

It localises to the membrane. The protein is Probable cytochrome P450 518A1 (cyp518A1) of Dictyostelium discoideum (Social amoeba).